A 153-amino-acid polypeptide reads, in one-letter code: 3-hydroxyacyl-[acyl-carrier-protein] dehydratase FabZ (153 aa).

His-57 is a catalytic residue.

Belongs to the thioester dehydratase family. FabZ subfamily.

It is found in the cytoplasm. It catalyses the reaction a (3R)-hydroxyacyl-[ACP] = a (2E)-enoyl-[ACP] + H2O. Involved in unsaturated fatty acids biosynthesis. Catalyzes the dehydration of short chain beta-hydroxyacyl-ACPs and long chain saturated and unsaturated beta-hydroxyacyl-ACPs. This chain is 3-hydroxyacyl-[acyl-carrier-protein] dehydratase FabZ, found in Aeromonas hydrophila subsp. hydrophila (strain ATCC 7966 / DSM 30187 / BCRC 13018 / CCUG 14551 / JCM 1027 / KCTC 2358 / NCIMB 9240 / NCTC 8049).